The chain runs to 282 residues: MAAQVLSGHEAAEAVYEEIRARLRSLSFTPSLRVIRLGEDPASVAYVRLKDKRARALGYRSQVEVYPEDLPEEALLERIAALNADEEVDGILVQLPLPPHIRTQRVLEAIHPLKDVDGFHPLNVGRLWSGGKGLFPCTPLGVVRLLKHYGVDLRGKEVVVVGRSNIVGKPLAGLLLREDATVTLAHSKTQDLPQVTRRAQVLVVAVGRPHLVRKEWVREGAIVVDVGVNRVEGRLLGDVHPEVAEVASALTPVPGGVGPMTVAMLMGNTLEAALLRRHGASG.

NADP(+) is bound by residues 162-164 (GRS), Ser187, and Val228.

Belongs to the tetrahydrofolate dehydrogenase/cyclohydrolase family. In terms of assembly, homodimer.

The enzyme catalyses (6R)-5,10-methylene-5,6,7,8-tetrahydrofolate + NADP(+) = (6R)-5,10-methenyltetrahydrofolate + NADPH. It catalyses the reaction (6R)-5,10-methenyltetrahydrofolate + H2O = (6R)-10-formyltetrahydrofolate + H(+). The protein operates within one-carbon metabolism; tetrahydrofolate interconversion. Its function is as follows. Catalyzes the oxidation of 5,10-methylenetetrahydrofolate to 5,10-methenyltetrahydrofolate and then the hydrolysis of 5,10-methenyltetrahydrofolate to 10-formyltetrahydrofolate. This Thermus thermophilus (strain ATCC BAA-163 / DSM 7039 / HB27) protein is Bifunctional protein FolD.